A 295-amino-acid chain; its full sequence is Bifunctional protein FolD (295 aa).

NADP(+)-binding positions include 165–167, Ser-190, and Ile-231; that span reads GRS.

This sequence belongs to the tetrahydrofolate dehydrogenase/cyclohydrolase family. As to quaternary structure, homodimer.

The enzyme catalyses (6R)-5,10-methylene-5,6,7,8-tetrahydrofolate + NADP(+) = (6R)-5,10-methenyltetrahydrofolate + NADPH. It carries out the reaction (6R)-5,10-methenyltetrahydrofolate + H2O = (6R)-10-formyltetrahydrofolate + H(+). It functions in the pathway one-carbon metabolism; tetrahydrofolate interconversion. In terms of biological role, catalyzes the oxidation of 5,10-methylenetetrahydrofolate to 5,10-methenyltetrahydrofolate and then the hydrolysis of 5,10-methenyltetrahydrofolate to 10-formyltetrahydrofolate. The chain is Bifunctional protein FolD from Nitrosomonas europaea (strain ATCC 19718 / CIP 103999 / KCTC 2705 / NBRC 14298).